The primary structure comprises 818 residues: Patatin-like phospholipase domain-containing protein YALI0D16379g (818 aa).

2 disordered regions span residues 1-50 (MLKL…RDVN) and 154-178 (EEKRRRGKSKKDKEGSEGDKTKTKE). Over residues 22 to 38 (SQQLTLDSPEGSETSSR) the composition is skewed to polar residues. A compositionally biased stretch (basic and acidic residues) spans 164-178 (KDKEGSEGDKTKTKE). A helical membrane pass occupies residues 223-243 (WPALFFIGMWLLFLTTIYASV). The PNPLA domain maps to 398–589 (LCLSGGGCFA…RTDIPVDALN (192 aa)). A GXSXG motif is present at residues 429–433 (GTSGG). Catalysis depends on Ser431, which acts as the Nucleophile. Asp576 serves as the catalytic Proton acceptor. Residues 781-805 (AGTDISSSNSDYDHEPQWEMDEGDS) are disordered.

It belongs to the PLPL family.

It localises to the membrane. Probable lipid hydrolase. The sequence is that of Patatin-like phospholipase domain-containing protein YALI0D16379g from Yarrowia lipolytica (strain CLIB 122 / E 150) (Yeast).